Here is a 257-residue protein sequence, read N- to C-terminus: uncharacterized protein (257 aa).

The helical transmembrane segment at 6–26 (IFWLNLAAIIIISIVVSGGMF) threads the bilayer.

It belongs to the staphylococcal tandem lipoprotein family.

Its subcellular location is the cell membrane. This is an uncharacterized protein from Staphylococcus aureus (strain Mu50 / ATCC 700699).